The following is a 62-amino-acid chain: Photosystem II reaction center protein Z (62 aa).

2 consecutive transmembrane segments (helical) span residues 8 to 28 (ALLLLVVMSFVLIVGVPVLYA) and 41 to 61 (LVGGLAWTALVVLVGVLNYFV).

It belongs to the PsbZ family. As to quaternary structure, PSII is composed of 1 copy each of membrane proteins PsbA, PsbB, PsbC, PsbD, PsbE, PsbF, PsbH, PsbI, PsbJ, PsbK, PsbL, PsbM, PsbT, PsbX, PsbY, PsbZ, Psb30/Ycf12, peripheral proteins PsbO, CyanoQ (PsbQ), PsbU, PsbV and a large number of cofactors. It forms dimeric complexes.

It is found in the cellular thylakoid membrane. In terms of biological role, may control the interaction of photosystem II (PSII) cores with the light-harvesting antenna, regulates electron flow through the 2 photosystem reaction centers. PSII is a light-driven water plastoquinone oxidoreductase, using light energy to abstract electrons from H(2)O, generating a proton gradient subsequently used for ATP formation. This Synechococcus elongatus (strain ATCC 33912 / PCC 7942 / FACHB-805) (Anacystis nidulans R2) protein is Photosystem II reaction center protein Z.